Reading from the N-terminus, the 180-residue chain is Pro-glucagon (180 aa).

The first 20 residues, 1 to 20 (MKSVYFVAGLFIMLAQGSWQ), serve as a signal peptide directing secretion. The segment at 23–58 (LQDTEEKPRSVSASQTDMLDDPDQMNEDKRHSQGTF) is disordered. At Ser54 the chain carries Phosphoserine. Residues 84 to 89 (NRNNIA) constitute a propeptide that is removed on maturation. Phosphoserine is present on residues Ser105 and Ser108. Arg127 is subject to Arginine amide. Residues 131–145 (DFPEEVAIVEELGRR) constitute a propeptide that is removed on maturation. Residues Ser150 and Ser152 each carry the phosphoserine modification.

It belongs to the glucagon family. Post-translationally, proglucagon is post-translationally processed in a tissue-specific manner in pancreatic A cells and intestinal L cells. In pancreatic A cells, the major bioactive hormone is glucagon cleaved by PCSK2/PC2. In the intestinal L cells PCSK1/PC1 liberates GLP-1, GLP-2, glicentin and oxyntomodulin. GLP-1 is further N-terminally truncated by post-translational processing in the intestinal L cells resulting in GLP-1(7-37) GLP-1-(7-36)amide. The C-terminal amidation is neither important for the metabolism of GLP-1 nor for its effects on the endocrine pancreas.

The protein resides in the secreted. Plays a key role in glucose metabolism and homeostasis. Regulates blood glucose by increasing gluconeogenesis and decreasing glycolysis. A counterregulatory hormone of insulin, raises plasma glucose levels in response to insulin-induced hypoglycemia. Plays an important role in initiating and maintaining hyperglycemic conditions in diabetes. Functionally, potent stimulator of glucose-dependent insulin release. Also stimulates insulin release in response to IL6. Plays important roles on gastric motility and the suppression of plasma glucagon levels. May be involved in the suppression of satiety and stimulation of glucose disposal in peripheral tissues, independent of the actions of insulin. Has growth-promoting activities on intestinal epithelium. May also regulate the hypothalamic pituitary axis (HPA) via effects on LH, TSH, CRH, oxytocin, and vasopressin secretion. Increases islet mass through stimulation of islet neogenesis and pancreatic beta cell proliferation. Inhibits beta cell apoptosis. In terms of biological role, stimulates intestinal growth and up-regulates villus height in the small intestine, concomitant with increased crypt cell proliferation and decreased enterocyte apoptosis. The gastrointestinal tract, from the stomach to the colon is the principal target for GLP-2 action. Plays a key role in nutrient homeostasis, enhancing nutrient assimilation through enhanced gastrointestinal function, as well as increasing nutrient disposal. Stimulates intestinal glucose transport and decreases mucosal permeability. Its function is as follows. Significantly reduces food intake. Inhibits gastric emptying in humans. Suppression of gastric emptying may lead to increased gastric distension, which may contribute to satiety by causing a sensation of fullness. May modulate gastric acid secretion and the gastro-pyloro-duodenal activity. May play an important role in intestinal mucosal growth in the early period of life. The sequence is that of Pro-glucagon (GCG) from Cavia porcellus (Guinea pig).